Reading from the N-terminus, the 352-residue chain is Endophilin-A1 (352 aa).

The tract at residues 1–21 (MSVAGLKKQFHKATQKVSEKV) is membrane-binding amphipathic helix. The disordered stretch occupies residues 1-27 (MSVAGLKKQFHKATQKVSEKVGGAEGT). The segment at 1–125 (MSVAGLKKQF…EVGEAMRELS (125 aa)) is binds and tubulates liposomes. Residues 18–249 (SEKVGGAEGT…LEERIRQASS (232 aa)) form the BAR domain. Positions 60–87 (PNPASRAKLSMINTMSKIRGQEKGPGYP) are required for dimerization upon membrane association. Residues 181 to 248 (EELRQALEKF…RLEERIRQAS (68 aa)) adopt a coiled-coil conformation. Residues 245 to 257 (RQASSQPRREYQP) are compositionally biased toward basic and acidic residues. Residues 245-289 (RQASSQPRREYQPKPRMSLEFPTGDSTQPNGGLSHTGTPKPSGVQ) form a disordered region. Ser262 carries the phosphoserine modification. Over residues 268–283 (GDSTQPNGGLSHTGTP) the composition is skewed to polar residues. Residues 290–349 (MDQPCCRALYDFEPENEGELGFKEGDIITLTNQIDENWYEGMLHGHSGFFPINYVEILVA) form the SH3 domain. Tyr299 carries the post-translational modification Phosphotyrosine.

Belongs to the endophilin family. As to quaternary structure, monomer; in cytoplasm. Homodimer; when associated with membranes. Interacts with OPHN1. Interacts with SYNJ1. Interacts with DNM1. Interacts with MAP4K3; the interaction appears to regulate MAP4K3-mediated JNK activation. Interacts with PDCD6IP. Interacts with ATXN2. Interacts with ADAM9 and ADAM15 cytoplasmic tails. Interacts with BIN2. Interacts with TMEM108. Interacts with ADGRB2. Brain, mostly in frontal cortex. Expressed at high level in fetal cerebellum.

It localises to the cytoplasm. The protein resides in the membrane. It is found in the early endosome. Its subcellular location is the presynapse. Functionally, implicated in synaptic vesicle endocytosis. May recruit other proteins to membranes with high curvature. Required for BDNF-dependent dendrite outgrowth. Cooperates with SH3GL2 to mediate BDNF-NTRK2 early endocytic trafficking and signaling from early endosomes. This Homo sapiens (Human) protein is Endophilin-A1 (SH3GL2).